The following is a 1374-amino-acid chain: Y' element ATP-dependent helicase YLL067C (1374 aa).

The disordered stretch occupies residues 321 to 345 (AGEAASSDHDQKISRVTRKRPREPK). Positions 375–552 (EIYMADTPSV…LQRIGLTGLA (178 aa)) constitute a Helicase ATP-binding domain. 388–395 (APPGYGKT) serves as a coordination point for ATP. Positions 498 to 501 (DEFH) match the DEAH box motif. A Helicase C-terminal domain is found at 609 to 758 (KLLLALFEIE…EFYGLESKKG (150 aa)). A compositionally biased stretch (low complexity) spans 832 to 1011 (ANASTNATTN…ATTTESTNAS (180 aa)). Residues 832-1035 (ANASTNATTN…RFHPVTDINK (204 aa)) are disordered. Positions 1012 to 1035 (AKEDANKDGNAEDNRFHPVTDINK) are enriched in basic and acidic residues.

The protein belongs to the helicase family. Yeast subtelomeric Y' repeat subfamily.

In terms of biological role, catalyzes DNA unwinding and is involved in telomerase-independent telomere maintenance. The sequence is that of Y' element ATP-dependent helicase YLL067C from Saccharomyces cerevisiae (strain ATCC 204508 / S288c) (Baker's yeast).